The primary structure comprises 620 residues: 1-deoxy-D-xylulose-5-phosphate synthase (620 aa).

Residues His75 and 116–118 contribute to the thiamine diphosphate site; that span reads AHS. Residue Asp147 participates in Mg(2+) binding. Thiamine diphosphate-binding positions include 148–149, Asn177, Tyr284, and Glu366; that span reads GA. Residue Asn177 participates in Mg(2+) binding.

This sequence belongs to the transketolase family. DXPS subfamily. In terms of assembly, homodimer. Mg(2+) is required as a cofactor. Thiamine diphosphate serves as cofactor.

The enzyme catalyses D-glyceraldehyde 3-phosphate + pyruvate + H(+) = 1-deoxy-D-xylulose 5-phosphate + CO2. Its pathway is metabolic intermediate biosynthesis; 1-deoxy-D-xylulose 5-phosphate biosynthesis; 1-deoxy-D-xylulose 5-phosphate from D-glyceraldehyde 3-phosphate and pyruvate: step 1/1. Functionally, catalyzes the acyloin condensation reaction between C atoms 2 and 3 of pyruvate and glyceraldehyde 3-phosphate to yield 1-deoxy-D-xylulose-5-phosphate (DXP). This chain is 1-deoxy-D-xylulose-5-phosphate synthase, found in Bordetella pertussis (strain Tohama I / ATCC BAA-589 / NCTC 13251).